The primary structure comprises 624 residues: ERAD-associated E3 ubiquitin-protein ligase ASI1 (624 aa).

The Perinuclear space portion of the chain corresponds to 1-69; it reads MNSSTSSENV…SEEIPPTLRS (69 aa). N-linked (GlcNAc...) asparagine glycans are attached at residues Asn-2, Asn-19, and Asn-29. The helical transmembrane segment at 70–90 threads the bilayer; sequence VFDTIGFFFSPYAIFCFVIAI. Residues 91-116 are Nuclear-facing; it reads VLNRFVVFYAVLNNGSRRTLPLWLSN. A helical membrane pass occupies residues 117 to 137; it reads VFHVSAVVVLAMVSLGPLTLG. The Perinuclear space portion of the chain corresponds to 138-152; the sequence is KDFKILGDPAFAQEK. A helical membrane pass occupies residues 153–173; sequence FLLNIFYAFAYSYCVETIFTI. Topologically, residues 174-209 are nuclear; sequence MRNSSPLEGTDYSLFELSIQFYTMTNNNTKFLDSPD. Residues 210-230 form a helical membrane-spanning segment; sequence YIIDCSMAILSRILIHLVEIF. Topologically, residues 231–273 are perinuclear space; sequence RLRNYRLLFSTIMNLCHICYLGIRVKQGGWKSLPFSVKFRHFP. A helical membrane pass occupies residues 274-294; that stretch reads KLFSVSIICLSLLIFKLSCLI. The Nuclear portion of the chain corresponds to 295–624; sequence RWDPFGKSRN…CKVHPVSDSK (330 aa). The disordered stretch occupies residues 467-490; it reads TSDDEYSEDYEPSEVESLGDSDEE. Residues 468–490 are compositionally biased toward acidic residues; sequence SDDEYSEDYEPSEVESLGDSDEE. An RING-type; atypical zinc finger spans residues 568 to 608; the sequence is CAVCKVNERNTVLWPCRCFAICEDCRISLGLRGFSTCVCCR.

As to quaternary structure, component of the Asi complex, which contains ASI1, ASI2 and ASI3. Interacts directly with ASI3. In terms of processing, glycosylation is not required for ASI1 function.

Its subcellular location is the nucleus inner membrane. It carries out the reaction S-ubiquitinyl-[E2 ubiquitin-conjugating enzyme]-L-cysteine + [acceptor protein]-L-lysine = [E2 ubiquitin-conjugating enzyme]-L-cysteine + N(6)-ubiquitinyl-[acceptor protein]-L-lysine.. Its function is as follows. E3 ubiquitin-protein ligase which transfers ubiquitin to substrates promoting their degradation. Part of the nuclear inner membrane (INM)-specific branch of the ER-associated degradation (ERAD) pathway, required for the elimination of misfolded proteins in the INM, a specialized ER subdomain. Required for ERG11 degradation. Negative regulator of SPS-sensor signaling. Together with ASI2 and ASI3, prevents the unprocessed precursor forms of STP1 and STP2 that escape cytoplasmic anchoring from inducing SPS-sensor-regulated genes in the absence of inducing signals. Controls amino acid permease (AAP) gene expression in response to amino acid availability, a process mediated by the transcription factors STP1 and STP1. The polypeptide is ERAD-associated E3 ubiquitin-protein ligase ASI1 (ASI1) (Saccharomyces cerevisiae (strain ATCC 204508 / S288c) (Baker's yeast)).